The chain runs to 84 residues: Anthracycline acyl carrier protein DauA (84 aa).

The Carrier domain maps to 3–80 (ELSLAELREI…SMLIFVNERL (78 aa)). The residue at position 40 (Ser40) is an O-(pantetheine 4'-phosphoryl)serine.

Its pathway is antibiotic biosynthesis; daunorubicin biosynthesis. It participates in antibiotic biosynthesis; carminomycin biosynthesis. The protein operates within antibiotic biosynthesis; rhodomycin biosynthesis. It functions in the pathway antibiotic biosynthesis; aclacinomycin biosynthesis. Its function is as follows. Involved in the biosynthesis of aklanonate which is an important precursor common to the formation of the clinically significant anthracyclines such as carminomycin, daunorubicin (daunomycin), rhodomycin, aclacinomycin T (aklavin) and aclacinomycin A (aclarubicin). These compounds are aromatic polyketide antibiotics that exhibit high cytotoxicity and are widely applied in the chemotherapy of a variety of cancers. The chain is Anthracycline acyl carrier protein DauA (dauA) from Streptomyces sp. (strain C5).